Consider the following 361-residue polypeptide: 3,6-anhydro-alpha-L-galactonate cycloisomerase (361 aa).

The active-site Proton acceptor is the K166. Residues D195, E221, and E247 each contribute to the Mg(2+) site. Catalysis depends on H297, which acts as the Proton donor/acceptor.

The protein belongs to the mandelate racemase/muconate lactonizing enzyme family. It depends on Mg(2+) as a cofactor.

The catalysed reaction is 3,6-anhydro-L-galactonate = 2-dehydro-3-deoxy-L-galactonate. Its function is as follows. Involved in the degradation of 3,6-anhydro-L-galactose, which is the major monomeric sugar of red macroalgae. Catalyzes the isomerization of 3,6-anhydrogalactonate (AHGA) to 2-keto-3-deoxy-galactonate (KDGal). This is 3,6-anhydro-alpha-L-galactonate cycloisomerase from Streptomyces coelicolor (strain ATCC BAA-471 / A3(2) / M145).